The sequence spans 263 residues: Methylesterase 18 (263 aa).

Ser-80 acts as the Acyl-ester intermediate in catalysis. Catalysis depends on charge relay system residues Asp-212 and His-240.

This sequence belongs to the AB hydrolase superfamily. Methylesterase family.

The enzyme catalyses methyl (indol-3-yl)acetate + H2O = (indol-3-yl)acetate + methanol + H(+). It participates in plant hormone biosynthesis. In terms of biological role, methylesterase shown to have methyl indole-3-acetic acid (MeIAA) esterase activity in vitro. This is Methylesterase 18 from Arabidopsis thaliana (Mouse-ear cress).